A 258-amino-acid chain; its full sequence is Probable splicing factor, arginine/serine-rich 3 (258 aa).

The RRM 1 domain occupies 9 to 83 (QKVYVGNLPG…RRIRVEFTRG (75 aa)). Disordered stretches follow at residues 81–120 (TRGV…PQRR) and 190–258 (AYIR…PSPQ). Residues 97-107 (GGDHRGGDFRG) are compositionally biased toward basic and acidic residues. Over residues 108 to 117 (GRGGGRGGGP) the composition is skewed to gly residues. The 75-residue stretch at 123–197 (YRVIVEGLPP…ETAYIRVRED (75 aa)) folds into the RRM 2 domain. The span at 208–223 (GRDRSRSRSPRAERRA) shows a compositional bias: basic and acidic residues. The span at 228–246 (SPRRSRSRSRSRSRSRSRS) shows a compositional bias: basic residues. A compositionally biased stretch (low complexity) spans 247 to 258 (ASRSPSRSPSPQ).

This sequence belongs to the splicing factor SR family. In terms of assembly, interacts with spk-1. In terms of processing, directly phosphorylated by spk-1 in vitro on serine residues of the RS domain. Predominantly coexpressed with spk-1 in adult hermaphrodite germlines.

The protein resides in the nucleus. Functionally, plays an essential role in embryogenesis. This chain is Probable splicing factor, arginine/serine-rich 3 (rsp-3), found in Caenorhabditis elegans.